Consider the following 167-residue polypeptide: Ribosome maturation factor RimM (167 aa).

A PRC barrel domain is found at 94–165 (EHEYYYSDII…TIKITPMEGL (72 aa)).

Belongs to the RimM family. Binds ribosomal protein uS19.

It localises to the cytoplasm. Its function is as follows. An accessory protein needed during the final step in the assembly of 30S ribosomal subunit, possibly for assembly of the head region. Essential for efficient processing of 16S rRNA. May be needed both before and after RbfA during the maturation of 16S rRNA. It has affinity for free ribosomal 30S subunits but not for 70S ribosomes. This Staphylococcus epidermidis (strain ATCC 35984 / DSM 28319 / BCRC 17069 / CCUG 31568 / BM 3577 / RP62A) protein is Ribosome maturation factor RimM.